Here is a 523-residue protein sequence, read N- to C-terminus: MNQAVRFRPVITFALAFLLLITWFAPRADAAAQWQAGTAYKKGDLVTYQNKDYECIQAHTALTGWEPSVVPALWKYVGEGSGGETPTPDTAPPSVPAGLTSSSITDTSVSLSWNASTDNVGVAGYEVYRNGVLVTSTSTTTAVVTGLTASTTYAFTVKAKDAAGNISAASTSLSVTTSNGSSNPGPTGTKWLIGYWHNFDNGSTNIRLRNVSTAYDVINVSFAEPISHGSGTLAFTPYNATVAEFKSDIAYLQSQGKKVLLSMGGANGTIELTDATKRQQFEDSLKSIISTYGFNGLDIDLEGSSLSLNAGDTDFRSPTTPKIVNLIQGVKAVKSHFGANFILTAAPETAYVQGGYLSYGGPWGAYLPVIHALRNELTLLHVQHYNTGSMVGLDGRSYAQGTADFHVAMAEMLLQGFHVGGSTGPFFSPLRPDQIAIGVPASQQAAGGGYTTPADLQKALNYLIKGVSYGGSYTLRQSTGYAGIKGIMTWSINWDAYTNNQFSSAHRPFLNGLSTQTTKEVVY.

The first 30 residues, 1–30 (MNQAVRFRPVITFALAFLLLITWFAPRADA), serve as a signal peptide directing secretion. A disordered region spans residues 80–101 (GSGGETPTPDTAPPSVPAGLTS). Positions 95 to 180 (VPAGLTSSSI…TSLSVTTSNG (86 aa)) constitute a Fibronectin type-III domain. The GH18 domain maps to 190-513 (KWLIGYWHNF…SAHRPFLNGL (324 aa)). The active-site Proton donor is Glu-302.

Belongs to the glycosyl hydrolase 18 family. Chitinase class II subfamily.

It carries out the reaction Random endo-hydrolysis of N-acetyl-beta-D-glucosaminide (1-&gt;4)-beta-linkages in chitin and chitodextrins.. With respect to regulation, activity is inhibited by Cu(2+) and Co(2+), and almost completely inhibited by SDS. In terms of biological role, acidic chitinase that displays a broad substrate specificity, showing the highest specific activity toward colloidal chitin, followed by ethylene glycol chitin and ball milled chitin, but exhibits no activity toward powdery chitin and chitosan. Hydrolyzes colloidal chitin and chitooligosaccharides with degree of polymerization 2-5 to release mainly N-acetyl chitobiose. Displays inhibition effects on the growth of some phytopathogenic fungi, including Alternaria alstroemeriae, Botrytis cinerea, Rhizoctonia solani, Sclerotinia sclerotiorum and Valsa mali. This chain is Chitinase Chi52, found in Paenibacillus xylanexedens.